A 52-amino-acid polypeptide reads, in one-letter code: Ornatin-B (52 aa).

Residues 42–44 (RGD) carry the Cell attachment site motif.

This sequence belongs to the ornatin family.

The protein resides in the secreted. Potent inhibitor of fibrinogen interaction with platelet receptors expressed on glycoprotein IIb-IIIa complex. May prevent blood from clotting during either feeding and/or storage of ingested blood. The sequence is that of Ornatin-B from Placobdella ornata (Turtle leech).